Reading from the N-terminus, the 412-residue chain is Adipocyte plasma membrane-associated protein (412 aa).

The tract at residues 1–32 (MTEADGLRQRRPLRPQVVTDDNRTPEAKGGSS) is disordered. The Cytoplasmic segment spans residues 1–39 (MTEADGLRQRRPLRPQVVTDDNRTPEAKGGSSFSGRVFR). A Phosphothreonine modification is found at Thr19. A helical membrane pass occupies residues 40–60 (ATFLMLAAFLTIPLLGALVLL). The Extracellular segment spans residues 61–412 (DSPIDPEPLS…RAPYLCRLRL (352 aa)). N-linked (GlcNAc...) asparagine glycosylation occurs at Asn159.

The protein belongs to the strictosidine synthase family.

The protein localises to the membrane. Exhibits strong arylesterase activity with beta-naphthyl acetate and phenyl acetate. May play a role in adipocyte differentiation. This Bos taurus (Bovine) protein is Adipocyte plasma membrane-associated protein (APMAP).